Here is a 250-residue protein sequence, read N- to C-terminus: Cytochrome c oxidase subunit 2 (250 aa).

Residues 1 to 27 lie on the Mitochondrial intermembrane side of the membrane; it reads MGLLFNNLIMNFDAPSPWGIYFQDSAT. The helical transmembrane segment at 28-61 threads the bilayer; sequence PQMEGLVELHDNIMYYLVVILFGVGWILLSIIRN. Residues 62–77 are Mitochondrial matrix-facing; that stretch reads YISTKSPISHKYLNHG. Residues 78-107 form a helical membrane-spanning segment; that stretch reads TLIELIWTITPAVILILIAFPSFKLLYLMD. Over 108–250 the chain is Mitochondrial intermembrane; it reads EVSDPSMSVL…EKFLTWLEEQ (143 aa). H185, C220, E222, C224, H228, and M231 together coordinate Cu cation. E222 contacts Mg(2+).

Belongs to the cytochrome c oxidase subunit 2 family. As to quaternary structure, component of the cytochrome c oxidase (complex IV, CIV), a multisubunit enzyme composed of 11 subunits. The complex is composed of a catalytic core of 3 subunits Cox1, Cox2 and Cox3, encoded in the mitochondrial DNA, and 8 supernumerary subunits Cox4, Cox5a/Cox5, Cox6, Cox7, Cox8, Cox7a/Cox9, Cox6b/Cox12 and Cox6a/Cox13, which are encoded in the nuclear genome. The complex exists as a monomer or a dimer and forms respiratory supercomplexes (SCs) in the inner mitochondrial membrane with NADH-ubiquinone oxidoreductase (complex I, CI) and ubiquinol-cytochrome c oxidoreductase (cytochrome b-c1 complex, complex III, CIII), resulting in various different assemblies (supercomplexes I(1)IV(1), I(1)III(3)IV(2), III(2)IV(1) and III(2)IV(2) as well as larger supercomplexes of compositions like I(1)III(2)IV(5-6)). Requires Cu cation as cofactor.

The protein localises to the mitochondrion inner membrane. It carries out the reaction 4 Fe(II)-[cytochrome c] + O2 + 8 H(+)(in) = 4 Fe(III)-[cytochrome c] + 2 H2O + 4 H(+)(out). Its function is as follows. Component of the cytochrome c oxidase, the last enzyme in the mitochondrial electron transport chain which drives oxidative phosphorylation. The respiratory chain contains 3 multisubunit complexes succinate dehydrogenase (complex II, CII), ubiquinol-cytochrome c oxidoreductase (cytochrome b-c1 complex, complex III, CIII) and cytochrome c oxidase (complex IV, CIV), that cooperate to transfer electrons derived from NADH and succinate to molecular oxygen, creating an electrochemical gradient over the inner membrane that drives transmembrane transport and the ATP synthase. Cytochrome c oxidase is the component of the respiratory chain that catalyzes the reduction of oxygen to water. Electrons originating from reduced cytochrome c in the intermembrane space (IMS) are transferred via the dinuclear copper A center (CU(A)) of Cox2 and heme A of Cox1 to the active site in Cox1, a binuclear center (BNC) formed by heme A3 and copper B (CU(B)). The BNC reduces molecular oxygen to 2 water molecules using 4 electrons from cytochrome c in the IMS and 4 protons from the mitochondrial matrix. The protein is Cytochrome c oxidase subunit 2 (cox-2) of Neurospora crassa (strain ATCC 24698 / 74-OR23-1A / CBS 708.71 / DSM 1257 / FGSC 987).